Reading from the N-terminus, the 210-residue chain is Glutathione S-transferase P (210 aa).

Residues 2–81 (ASYTIVYFPV…HLGRTLGLYG (80 aa)) enclose the GST N-terminal domain. Phosphotyrosine; by EGFR is present on Tyr4. Residues Tyr8, Arg14, Trp39, Lys45, and 52 to 53 (QL) each bind glutathione. The residue at position 62 (Thr62) is a Phosphothreonine. 65-66 (QS) serves as a coordination point for glutathione. Residues 83–204 (DQREAALVDM…ASPEHVNRPI (122 aa)) enclose the GST C-terminal domain. Lys103 and Lys116 each carry N6-succinyllysine. The residue at position 128 (Lys128) is an N6-acetyllysine.

The protein belongs to the GST superfamily. Pi family. In terms of assembly, homodimer. Interacts with CDK5.

It localises to the cytoplasm. Its subcellular location is the mitochondrion. It is found in the nucleus. The enzyme catalyses RX + glutathione = an S-substituted glutathione + a halide anion + H(+). It catalyses the reaction prostaglandin J2 + glutathione = prostaglandin J2-S-(R)-glutathione. It carries out the reaction prostaglandin J2 + glutathione = prostaglandin J2-S-(S)-glutathione. The catalysed reaction is prostaglandin A2 + glutathione = prostaglandin A2-S-(S)-glutathione. The enzyme catalyses 11(S)-hydroxy-14(S),15(S)-epoxy-(5Z,8Z,12E)-eicosatrienoate + glutathione = (11S,15S)-dihydroxy-14(R)-S-glutathionyl-(5Z,8Z,12E)-eicosatrienoate. Conjugation of reduced glutathione to a wide number of exogenous and endogenous hydrophobic electrophiles. Involved in the formation of glutathione conjugates of both prostaglandin A2 (PGA2) and prostaglandin J2 (PGJ2). Participates in the formation of novel hepoxilin regioisomers. Negatively regulates CDK5 activity via p25/p35 translocation to prevent neurodegeneration. The protein is Glutathione S-transferase P (GSTP1) of Capra hircus (Goat).